The chain runs to 183 residues: Dual specificity protein phosphatase 22-B (183 aa).

Residues 4–144 (GINKVLPDLY…LQEFQTGELQ (141 aa)) form the Tyrosine-protein phosphatase domain. Cys-88 acts as the Phosphocysteine intermediate in catalysis.

The protein belongs to the protein-tyrosine phosphatase family. Non-receptor class dual specificity subfamily.

It localises to the cytoplasm. Its subcellular location is the nucleus. The enzyme catalyses O-phospho-L-tyrosyl-[protein] + H2O = L-tyrosyl-[protein] + phosphate. It carries out the reaction O-phospho-L-seryl-[protein] + H2O = L-seryl-[protein] + phosphate. It catalyses the reaction O-phospho-L-threonyl-[protein] + H2O = L-threonyl-[protein] + phosphate. Activates the Jnk signaling pathway. Dephosphorylates and deactivates p38 and stress-activated protein kinase/c-Jun N-terminal kinase (SAPK/JNK). The chain is Dual specificity protein phosphatase 22-B (dusp22b) from Danio rerio (Zebrafish).